We begin with the raw amino-acid sequence, 215 residues long: 7-cyano-7-deazaguanine synthase (215 aa).

An ATP-binding site is contributed by 8–18 (LSAGLDSTVSL). Zn(2+) contacts are provided by cysteine 191, cysteine 199, cysteine 202, and cysteine 205.

This sequence belongs to the QueC family. Homodimer. Zn(2+) serves as cofactor.

The catalysed reaction is 7-carboxy-7-deazaguanine + NH4(+) + ATP = 7-cyano-7-deazaguanine + ADP + phosphate + H2O + H(+). It participates in purine metabolism; 7-cyano-7-deazaguanine biosynthesis. In terms of biological role, catalyzes the ATP-dependent conversion of 7-carboxy-7-deazaguanine (CDG) to 7-cyano-7-deazaguanine (preQ(0)). The sequence is that of 7-cyano-7-deazaguanine synthase from Carboxydothermus hydrogenoformans (strain ATCC BAA-161 / DSM 6008 / Z-2901).